The primary structure comprises 246 residues: Enolase-phosphatase E1 (246 aa).

Mg(2+) contacts are provided by Asp11 and Glu13. Substrate contacts are provided by residues 140 to 141 (SS) and Lys174. Asp199 is a binding site for Mg(2+).

The protein belongs to the HAD-like hydrolase superfamily. MasA/MtnC family. As to quaternary structure, monomer. It depends on Mg(2+) as a cofactor.

Its subcellular location is the cytoplasm. It localises to the nucleus. It catalyses the reaction 5-methylsulfanyl-2,3-dioxopentyl phosphate + H2O = 1,2-dihydroxy-5-(methylsulfanyl)pent-1-en-3-one + phosphate. Its pathway is amino-acid biosynthesis; L-methionine biosynthesis via salvage pathway; L-methionine from S-methyl-5-thio-alpha-D-ribose 1-phosphate: step 3/6. It functions in the pathway amino-acid biosynthesis; L-methionine biosynthesis via salvage pathway; L-methionine from S-methyl-5-thio-alpha-D-ribose 1-phosphate: step 4/6. Functionally, bifunctional enzyme that catalyzes the enolization of 2,3-diketo-5-methylthiopentyl-1-phosphate (DK-MTP-1-P) into the intermediate 2-hydroxy-3-keto-5-methylthiopentenyl-1-phosphate (HK-MTPenyl-1-P), which is then dephosphorylated to form the acireductone 1,2-dihydroxy-3-keto-5-methylthiopentene (DHK-MTPene). The polypeptide is Enolase-phosphatase E1 (Acyrthosiphon pisum (Pea aphid)).